Here is a 661-residue protein sequence, read N- to C-terminus: UvrABC system protein B (661 aa).

One can recognise a Helicase ATP-binding domain in the interval Ala25–Arg182. Gly38–Thr45 is a binding site for ATP. The Beta-hairpin motif lies at Tyr91–Ile114. The Helicase C-terminal domain maps to Gln430–Ile592. In terms of domain architecture, UVR spans Lys621–Ala656.

Belongs to the UvrB family. As to quaternary structure, forms a heterotetramer with UvrA during the search for lesions. Interacts with UvrC in an incision complex.

The protein resides in the cytoplasm. Functionally, the UvrABC repair system catalyzes the recognition and processing of DNA lesions. A damage recognition complex composed of 2 UvrA and 2 UvrB subunits scans DNA for abnormalities. Upon binding of the UvrA(2)B(2) complex to a putative damaged site, the DNA wraps around one UvrB monomer. DNA wrap is dependent on ATP binding by UvrB and probably causes local melting of the DNA helix, facilitating insertion of UvrB beta-hairpin between the DNA strands. Then UvrB probes one DNA strand for the presence of a lesion. If a lesion is found the UvrA subunits dissociate and the UvrB-DNA preincision complex is formed. This complex is subsequently bound by UvrC and the second UvrB is released. If no lesion is found, the DNA wraps around the other UvrB subunit that will check the other stand for damage. The sequence is that of UvrABC system protein B from Rickettsia peacockii (strain Rustic).